The chain runs to 486 residues: 6-phosphogluconate dehydrogenase, decarboxylating 2 (486 aa).

Residues 12-17, 35-37, 79-81, and asparagine 107 each bind NADP(+); these read GLAVMG, NRT, and VKA. Substrate contacts are provided by residues asparagine 107 and 133-135; that span reads SGG. The Proton acceptor role is filled by lysine 188. 191-192 lines the substrate pocket; sequence HN. The active-site Proton donor is the glutamate 195. 5 residues coordinate substrate: tyrosine 196, lysine 266, arginine 293, arginine 456, and histidine 462. The short motif at 484 to 486 is the Microbody targeting signal element; it reads SKI.

Belongs to the 6-phosphogluconate dehydrogenase family. Forms homodimer. Forms heterodimers with PGD1 or PGD3.

It localises to the cytoplasm. The protein resides in the cytosol. The protein localises to the peroxisome. The enzyme catalyses 6-phospho-D-gluconate + NADP(+) = D-ribulose 5-phosphate + CO2 + NADPH. It participates in carbohydrate degradation; pentose phosphate pathway; D-ribulose 5-phosphate from D-glucose 6-phosphate (oxidative stage): step 3/3. In terms of biological role, catalyzes the oxidative decarboxylation of 6-phosphogluconate to ribulose 5-phosphate and CO(2), with concomitant reduction of NADP to NADPH. Required for guided growth of the male gametophytes and interaction between the pollen tube and the ovule. In Arabidopsis thaliana (Mouse-ear cress), this protein is 6-phosphogluconate dehydrogenase, decarboxylating 2.